A 94-amino-acid chain; its full sequence is CRISPR-associated endoribonuclease Cas2 (94 aa).

Asp-11 contacts Mg(2+).

The protein belongs to the CRISPR-associated endoribonuclease Cas2 protein family. As to quaternary structure, homodimer, forms a heterotetramer with a Cas1 homodimer. Mg(2+) serves as cofactor.

Its function is as follows. CRISPR (clustered regularly interspaced short palindromic repeat), is an adaptive immune system that provides protection against mobile genetic elements (viruses, transposable elements and conjugative plasmids). CRISPR clusters contain sequences complementary to antecedent mobile elements and target invading nucleic acids. CRISPR clusters are transcribed and processed into CRISPR RNA (crRNA). Functions as a ssRNA-specific endoribonuclease. Involved in the integration of spacer DNA into the CRISPR cassette. The chain is CRISPR-associated endoribonuclease Cas2 from Allochromatium vinosum (strain ATCC 17899 / DSM 180 / NBRC 103801 / NCIMB 10441 / D) (Chromatium vinosum).